A 482-amino-acid chain; its full sequence is tRNA sulfurtransferase (482 aa).

A THUMP domain is found at 61–165; it reads EQAIEALACI…GEELFIVSAI (105 aa). ATP-binding positions include 183–184, K265, G287, and Q296; that span reads LI. A disulfide bridge connects residues C344 and C456. The Rhodanese domain maps to 404 to 482; it reads SGDNEVILDI…GFANVKVYRP (79 aa). C456 serves as the catalytic Cysteine persulfide intermediate.

Belongs to the ThiI family.

Its subcellular location is the cytoplasm. It catalyses the reaction [ThiI sulfur-carrier protein]-S-sulfanyl-L-cysteine + a uridine in tRNA + 2 reduced [2Fe-2S]-[ferredoxin] + ATP + H(+) = [ThiI sulfur-carrier protein]-L-cysteine + a 4-thiouridine in tRNA + 2 oxidized [2Fe-2S]-[ferredoxin] + AMP + diphosphate. The enzyme catalyses [ThiS sulfur-carrier protein]-C-terminal Gly-Gly-AMP + S-sulfanyl-L-cysteinyl-[cysteine desulfurase] + AH2 = [ThiS sulfur-carrier protein]-C-terminal-Gly-aminoethanethioate + L-cysteinyl-[cysteine desulfurase] + A + AMP + 2 H(+). It functions in the pathway cofactor biosynthesis; thiamine diphosphate biosynthesis. Functionally, catalyzes the ATP-dependent transfer of a sulfur to tRNA to produce 4-thiouridine in position 8 of tRNAs, which functions as a near-UV photosensor. Also catalyzes the transfer of sulfur to the sulfur carrier protein ThiS, forming ThiS-thiocarboxylate. This is a step in the synthesis of thiazole, in the thiamine biosynthesis pathway. The sulfur is donated as persulfide by IscS. In Aeromonas hydrophila subsp. hydrophila (strain ATCC 7966 / DSM 30187 / BCRC 13018 / CCUG 14551 / JCM 1027 / KCTC 2358 / NCIMB 9240 / NCTC 8049), this protein is tRNA sulfurtransferase.